Here is a 228-residue protein sequence, read N- to C-terminus: MIQFVLMDIEGTTTSVSFVFDVLFPYFRDNIQSIASRAEEPEIAAILKQVQDLALTETGTSLDQTGAIATLHQWSVEDRKVAPLKAMQGFLWEEGYKNGDFRGHVYPDVLPKLKEWQKEGIQLGIYSSGSVKAQKLLFGYSDYGDLTGYFDYFFDLKVGQKRDVQSYQAIAQAVQLPPEAILFLSDVPAELDAAIQAGYQAWQLVRPGTTASPTHQQVTDFGAITSLH.

It belongs to the HAD-like hydrolase superfamily. MasA/MtnC family. In terms of assembly, monomer. Mg(2+) is required as a cofactor.

It catalyses the reaction 5-methylsulfanyl-2,3-dioxopentyl phosphate + H2O = 1,2-dihydroxy-5-(methylsulfanyl)pent-1-en-3-one + phosphate. It participates in amino-acid biosynthesis; L-methionine biosynthesis via salvage pathway; L-methionine from S-methyl-5-thio-alpha-D-ribose 1-phosphate: step 3/6. Its pathway is amino-acid biosynthesis; L-methionine biosynthesis via salvage pathway; L-methionine from S-methyl-5-thio-alpha-D-ribose 1-phosphate: step 4/6. Its function is as follows. Bifunctional enzyme that catalyzes the enolization of 2,3-diketo-5-methylthiopentyl-1-phosphate (DK-MTP-1-P) into the intermediate 2-hydroxy-3-keto-5-methylthiopentenyl-1-phosphate (HK-MTPenyl-1-P), which is then dephosphorylated to form the acireductone 1,2-dihydroxy-3-keto-5-methylthiopentene (DHK-MTPene). The protein is Enolase-phosphatase E1 of Picosynechococcus sp. (strain ATCC 27264 / PCC 7002 / PR-6) (Agmenellum quadruplicatum).